Here is a 498-residue protein sequence, read N- to C-terminus: MPSPPAMLLGGLLLIVASTTVAQRRGQEAAGRRRAHRVQHGQCSYTFVLPEPEPCPPEPEAFGGSNSLQRDSPAATLNLGDWPSQRMRQLEKMLENNTQWLQKLERYIQVNLRLELAQAQQHMVQNQTATMLELGTSLLTQTTAQTRKLTDVEAQVLNQTSRMEIQLLETSLSTNKLEKQLLLQGHELHRLQGHNSALETRVQALETQQQAELASLSGEKERLRRLLGRQSGALAGLERTLRAASSNSSLLQRQQHQLLESVQRLVRVMAQGPASMRAADQLFQDCAEIQRFGANASGIYTIHVANVTEPRKVFCDMEASGGGWTLIQRRENGSVNFQRNWKDYKQGFGNPAGEHWLGNEVVHQLTSRATYSLRVELQDWEGNEAYAQYEHFQLGSEAQLYRLSLSGYSGSAGRQSSLVLQGTNFSTRDADNDNCLCKCAQMLSGGWWFDACGLSNLNGIYYPARHHVRKLNGIRWHYFQGPSYSLRTTRMMVRPSGI.

Positions 1-22 are cleaved as a signal peptide; that stretch reads MPSPPAMLLGGLLLIVASTTVA. The tract at residues 51–80 is disordered; that stretch reads EPEPCPPEPEAFGGSNSLQRDSPAATLNLG. Residues 85-109 are a coiled coil; sequence QRMRQLEKMLENNTQWLQKLERYIQ. Asparagine 96, asparagine 126, asparagine 158, asparagine 247, asparagine 295, asparagine 306, asparagine 332, and asparagine 424 each carry an N-linked (GlcNAc...) asparagine glycan. Residues 186–254 are a coiled coil; that stretch reads HELHRLQGHN…SSNSSLLQRQ (69 aa). The region spanning 277–497 is the Fibrinogen C-terminal domain; that stretch reads RAADQLFQDC…TTRMMVRPSG (221 aa). A disulfide bridge links cysteine 286 with cysteine 315. Cysteine 439 and cysteine 452 are joined by a disulfide.

In terms of assembly, homodimer; disulfide-linked. Interacts with TEK/TIE2.

It is found in the secreted. Functionally, binds to TEK/TIE2, modulating ANGPT1 signaling. Can induce tyrosine phosphorylation of TEK/TIE2. Promotes endothelial cell survival, migration and angiogenesis. This chain is Angiopoietin-4 (ANGPT4), found in Bos taurus (Bovine).